Consider the following 159-residue polypeptide: Cytochrome c-type biogenesis protein CcmE (159 aa).

Residues 1–7 (MTRKGRR) are Cytoplasmic-facing. Residues 8 to 28 (LVLIGAGLGVLALAAGLILSA) form a helical; Signal-anchor for type II membrane protein membrane-spanning segment. At 29 to 159 (LNDTIVFFRS…AAPVQRAPGS (131 aa)) the chain is on the periplasmic side. Residues histidine 121 and tyrosine 125 each contribute to the heme site. The segment at 134 to 159 (LKKQGRWQEGGPAPGTAAPVQRAPGS) is disordered.

Belongs to the CcmE/CycJ family.

It localises to the cell inner membrane. Functionally, heme chaperone required for the biogenesis of c-type cytochromes. Transiently binds heme delivered by CcmC and transfers the heme to apo-cytochromes in a process facilitated by CcmF and CcmH. This Xanthobacter autotrophicus (strain ATCC BAA-1158 / Py2) protein is Cytochrome c-type biogenesis protein CcmE.